The sequence spans 663 residues: Transketolase 1 (663 aa).

His26 contributes to the substrate binding site. Lys46 is modified (N6-acetyllysine). Thiamine diphosphate contacts are provided by residues His66 and 114 to 116 (GPL). Position 155 (Asp155) interacts with Mg(2+). The thiamine diphosphate site is built by Gly156 and Asn185. Mg(2+) contacts are provided by Asn185 and Ile187. The substrate site is built by His261, Arg358, and Ser385. His261 contributes to the thiamine diphosphate binding site. Glu411 acts as the Proton donor in catalysis. Residue Phe437 coordinates thiamine diphosphate. His461, Asp469, His473, and Arg520 together coordinate substrate.

Belongs to the transketolase family. As to quaternary structure, homodimer. The cofactor is Mg(2+). Requires Ca(2+) as cofactor. It depends on Mn(2+) as a cofactor. Co(2+) serves as cofactor. Thiamine diphosphate is required as a cofactor.

The catalysed reaction is D-sedoheptulose 7-phosphate + D-glyceraldehyde 3-phosphate = aldehydo-D-ribose 5-phosphate + D-xylulose 5-phosphate. In terms of biological role, catalyzes the transfer of a two-carbon ketol group from a ketose donor to an aldose acceptor, via a covalent intermediate with the cofactor thiamine pyrophosphate. Thus, catalyzes the reversible transfer of a two-carbon ketol group from sedoheptulose-7-phosphate to glyceraldehyde-3-phosphate, producing xylulose-5-phosphate and ribose-5-phosphate. In Escherichia coli (strain K12), this protein is Transketolase 1 (tktA).